The sequence spans 726 residues: Catalase-peroxidase (726 aa).

The interval 1 to 33 is disordered; it reads MSTTDDTHNTLSTGKCPFHQGGHDRSAGAGTAS. A cross-link (tryptophyl-tyrosyl-methioninium (Trp-Tyr) (with M-252)) is located at residues 105 to 226; sequence WHGAGTYRSI…LGATEMGLIY (122 aa). Catalysis depends on histidine 106, which acts as the Proton acceptor. The tryptophyl-tyrosyl-methioninium (Tyr-Met) (with W-105) cross-link spans 226 to 252; it reads YVNPEGPDHSGEPLSAAAAIRATFGNM. A heme b-binding site is contributed by histidine 267.

Belongs to the peroxidase family. Peroxidase/catalase subfamily. Homodimer or homotetramer. Heme b serves as cofactor. In terms of processing, formation of the three residue Trp-Tyr-Met cross-link is important for the catalase, but not the peroxidase activity of the enzyme.

It catalyses the reaction H2O2 + AH2 = A + 2 H2O. It carries out the reaction 2 H2O2 = O2 + 2 H2O. In terms of biological role, bifunctional enzyme with both catalase and broad-spectrum peroxidase activity. This Salmonella paratyphi B (strain ATCC BAA-1250 / SPB7) protein is Catalase-peroxidase.